A 194-amino-acid polypeptide reads, in one-letter code: Glycerol-3-phosphate acyltransferase (194 aa).

Transmembrane regions (helical) follow at residues 3-23 (AGLF…GLLL), 52-72 (VGIL…LLAW), 80-100 (MQAW…FLLF), 112-132 (VFLA…ILLV), 135-155 (WRYI…IIFF), and 162-182 (LLIA…SNIS).

The protein belongs to the PlsY family. In terms of assembly, probably interacts with PlsX.

It is found in the cell inner membrane. It catalyses the reaction an acyl phosphate + sn-glycerol 3-phosphate = a 1-acyl-sn-glycero-3-phosphate + phosphate. Its pathway is lipid metabolism; phospholipid metabolism. In terms of biological role, catalyzes the transfer of an acyl group from acyl-phosphate (acyl-PO(4)) to glycerol-3-phosphate (G3P) to form lysophosphatidic acid (LPA). This enzyme utilizes acyl-phosphate as fatty acyl donor, but not acyl-CoA or acyl-ACP. The sequence is that of Glycerol-3-phosphate acyltransferase from Trichlorobacter lovleyi (strain ATCC BAA-1151 / DSM 17278 / SZ) (Geobacter lovleyi).